We begin with the raw amino-acid sequence, 303 residues long: Cysteine synthase B (303 aa).

Position 41 is an N6-(pyridoxal phosphate)lysine (K41). Residues N71, 174–178 (GTTGT), and S255 contribute to the pyridoxal 5'-phosphate site.

This sequence belongs to the cysteine synthase/cystathionine beta-synthase family. In terms of assembly, homodimer. It depends on pyridoxal 5'-phosphate as a cofactor.

The catalysed reaction is O-acetyl-L-serine + hydrogen sulfide = L-cysteine + acetate. The protein operates within amino-acid biosynthesis; L-cysteine biosynthesis; L-cysteine from L-serine: step 2/2. Its function is as follows. Two cysteine synthase enzymes are found. Both catalyze the same reaction. Cysteine synthase B can also use thiosulfate in place of sulfide to give cysteine thiosulfonate as a product. The polypeptide is Cysteine synthase B (cysM) (Escherichia coli (strain K12)).